A 337-amino-acid chain; its full sequence is Ribosomal RNA small subunit methyltransferase C (337 aa).

The protein belongs to the methyltransferase superfamily. RsmC family. As to quaternary structure, monomer.

It localises to the cytoplasm. It carries out the reaction guanosine(1207) in 16S rRNA + S-adenosyl-L-methionine = N(2)-methylguanosine(1207) in 16S rRNA + S-adenosyl-L-homocysteine + H(+). In terms of biological role, specifically methylates the guanine in position 1207 of 16S rRNA in the 30S particle. This chain is Ribosomal RNA small subunit methyltransferase C, found in Acinetobacter baumannii (strain AB307-0294).